The following is a 473-amino-acid chain: Aspartyl/glutamyl-tRNA(Asn/Gln) amidotransferase subunit B (473 aa).

It belongs to the GatB/GatE family. GatB subfamily. As to quaternary structure, heterotrimer of A, B and C subunits.

It carries out the reaction L-glutamyl-tRNA(Gln) + L-glutamine + ATP + H2O = L-glutaminyl-tRNA(Gln) + L-glutamate + ADP + phosphate + H(+). The catalysed reaction is L-aspartyl-tRNA(Asn) + L-glutamine + ATP + H2O = L-asparaginyl-tRNA(Asn) + L-glutamate + ADP + phosphate + 2 H(+). Allows the formation of correctly charged Asn-tRNA(Asn) or Gln-tRNA(Gln) through the transamidation of misacylated Asp-tRNA(Asn) or Glu-tRNA(Gln) in organisms which lack either or both of asparaginyl-tRNA or glutaminyl-tRNA synthetases. The reaction takes place in the presence of glutamine and ATP through an activated phospho-Asp-tRNA(Asn) or phospho-Glu-tRNA(Gln). In Francisella tularensis subsp. tularensis (strain FSC 198), this protein is Aspartyl/glutamyl-tRNA(Asn/Gln) amidotransferase subunit B.